Reading from the N-terminus, the 166-residue chain is MRLILLSGLLLLGTFLANGDEKDSEIQLLNSMIEAVMILQRDFSNLRYALMTVHNARSFGSGSERVYVSNKEVSKFEGLEEICSQAGGHIPSPQLENQNKAFADVLERHNKAAYLVVGDSANFTNWAAGHPNEADGTCVKADTHGSWHSASCDDNLLVVCEFYFIL.

An N-terminal signal peptide occupies residues Met1–Gly19. In terms of domain architecture, C-type lectin spans Leu46 to Glu161. 2 disulfide bridges follow: Cys83-Cys160 and Cys138-Cys152. Asn122 is a glycosylation site (N-linked (GlcNAc...) asparagine).

This sequence belongs to the alpha-type phospholipase A2 inhibitor family. In terms of assembly, homomer composed of 20-25-kDa subunits that form oligomers of 180 kDa. Post-translationally, N-glycosylated. The glycosidic chain may contain superficial sialic acid residues. In terms of tissue distribution, expressed by the liver.

Its subcellular location is the secreted. Functionally, selectively inhibits the toxic properties of myotoxin-II from the same venom (AC P81165). Does not inhibit PLA2, anti-coagulant and lethal activities of the basic myotoxin I from the same venom (AC P0DQP6), nor the different crotoxin forms (heterodimer or subunit B alone). Does not block the enzymatic activity of crude acidic PLA2 fractions from the same venom. This is Phospholipase A2 inhibitor CgMIP-II from Cerrophidion godmani (Porthidium godmani).